A 271-amino-acid chain; its full sequence is Regulatory protein RecX (271 aa).

Belongs to the RecX family.

It is found in the cytoplasm. Modulates RecA activity. In Lactobacillus gasseri (strain ATCC 33323 / DSM 20243 / BCRC 14619 / CIP 102991 / JCM 1131 / KCTC 3163 / NCIMB 11718 / NCTC 13722 / AM63), this protein is Regulatory protein RecX.